Reading from the N-terminus, the 303-residue chain is 1-phosphofructokinase (303 aa).

248–249 (GD) lines the ATP pocket. Residue Asp-249 is the Proton acceptor of the active site.

Belongs to the carbohydrate kinase PfkB family.

It catalyses the reaction beta-D-fructose 1-phosphate + ATP = beta-D-fructose 1,6-bisphosphate + ADP + H(+). Its function is as follows. Catalyzes the ATP-dependent phosphorylation of fructose-l-phosphate to fructose-l,6-bisphosphate. In Bacillus subtilis (strain 168), this protein is 1-phosphofructokinase (fruK).